A 535-amino-acid polypeptide reads, in one-letter code: 3-hydroxyindolin-2-one monooxygenase (535 aa).

Transmembrane regions (helical) follow at residues 14-34 and 469-489; these read VVQCTPTQAAAVLGVLLLLAI and ICAGATFAIATVEIMLANLIY. Heme is bound at residue Cys470.

This sequence belongs to the cytochrome P450 family. The cofactor is heme.

The protein localises to the membrane. It catalyses the reaction 3-hydroxyindolin-2-one + reduced [NADPH--hemoprotein reductase] + O2 = 2-hydroxy-2H-1,4-benzoxazin-3(4H)-one + oxidized [NADPH--hemoprotein reductase] + H2O + H(+). It functions in the pathway secondary metabolite biosynthesis; 2,4-dihydroxy-1,4-benzoxazin-3-one biosynthesis; 2,4-dihydroxy-1,4-benzoxazin-3-one from indoleglycerol phosphate: step 4/5. Its function is as follows. Catalyzes the conversion of 3-hydroxyindolin-2-one to 2-hydroxy-1,4-benzoxazin-3-one (HBOA). This Zea mays (Maize) protein is 3-hydroxyindolin-2-one monooxygenase (CYP71C1).